The following is a 367-amino-acid chain: Ferrochelatase (367 aa).

Fe cation-binding residues include His213 and Glu294.

The protein belongs to the ferrochelatase family.

Its subcellular location is the cytoplasm. The enzyme catalyses heme b + 2 H(+) = protoporphyrin IX + Fe(2+). It functions in the pathway porphyrin-containing compound metabolism; protoheme biosynthesis; protoheme from protoporphyrin-IX: step 1/1. Catalyzes the ferrous insertion into protoporphyrin IX. The polypeptide is Ferrochelatase (Dechloromonas aromatica (strain RCB)).